Consider the following 183-residue polypeptide: Ras-related protein Rap-2c (183 aa).

10 to 17 (GSGGVGKS) lines the GTP pocket. Residues 32 to 40 (YDPTIEDFY) carry the Effector region motif. Residues 57 to 61 (DTAGT) and 116 to 119 (NKVD) each bind GTP. Residues cysteine 176 and cysteine 177 are each lipidated (S-palmitoyl cysteine). Cysteine 180 carries the cysteine methyl ester modification. Cysteine 180 is lipidated: S-geranylgeranyl cysteine. The propeptide at 181 to 183 (VVQ) is removed in mature form.

Belongs to the small GTPase superfamily. Ras family. In terms of processing, palmitoylated. Palmitoylation is required for association with recycling endosome membranes and activation of TNIK.

The protein localises to the cytoplasm. It is found in the recycling endosome membrane. It carries out the reaction GTP + H2O = GDP + phosphate + H(+). Small GTP-binding protein which cycles between a GDP-bound inactive and a GTP-bound active form. May play a role in cytoskeletal rearrangements and regulate cell spreading through activation of the effector TNIK. May play a role in SRE-mediated gene transcription. The sequence is that of Ras-related protein Rap-2c (RAP2C) from Bos taurus (Bovine).